Here is a 75-residue protein sequence, read N- to C-terminus: MNEELTFEEEMMRLEEIVNTLEKGNLMLEESFNLFKEGVEISKRLEKRLSEVEGKITLLINENEEIDFKEEEKDV.

It belongs to the XseB family. Heterooligomer composed of large and small subunits.

The protein localises to the cytoplasm. The catalysed reaction is Exonucleolytic cleavage in either 5'- to 3'- or 3'- to 5'-direction to yield nucleoside 5'-phosphates.. In terms of biological role, bidirectionally degrades single-stranded DNA into large acid-insoluble oligonucleotides, which are then degraded further into small acid-soluble oligonucleotides. The sequence is that of Exodeoxyribonuclease 7 small subunit from Thermoanaerobacter sp. (strain X514).